The sequence spans 859 residues: Leucine--tRNA ligase (859 aa).

Residues 42 to 52 (PYPSGRLHMGH) carry the 'HIGH' region motif. Positions 618–622 (KMSKS) match the 'KMSKS' region motif. An ATP-binding site is contributed by K621.

This sequence belongs to the class-I aminoacyl-tRNA synthetase family.

It is found in the cytoplasm. It catalyses the reaction tRNA(Leu) + L-leucine + ATP = L-leucyl-tRNA(Leu) + AMP + diphosphate. The protein is Leucine--tRNA ligase of Shewanella sp. (strain W3-18-1).